We begin with the raw amino-acid sequence, 520 residues long: Cholesterol side-chain cleavage enzyme, mitochondrial (520 aa).

The transit peptide at 1 to 39 directs the protein to the mitochondrion; sequence MLVRGLPLRSVLVKGCQPLLSAPREGPGHPRVPTGEGAG. The disordered stretch occupies residues 19–47; sequence LLSAPREGPGHPRVPTGEGAGMSSHSPRP. Heme is bound at residue Cys-461.

The protein belongs to the cytochrome P450 family. Interacts with FDX1/adrenodoxin. Heme is required as a cofactor.

The protein resides in the mitochondrion inner membrane. The enzyme catalyses 6 reduced [adrenodoxin] + cholesterol + 3 O2 + 6 H(+) = 4-methylpentanal + pregnenolone + 6 oxidized [adrenodoxin] + 4 H2O. It carries out the reaction 2 reduced [adrenodoxin] + cholesterol + O2 + 2 H(+) = (22R)-hydroxycholesterol + 2 oxidized [adrenodoxin] + H2O. The catalysed reaction is (22R)-hydroxycholesterol + 2 reduced [adrenodoxin] + O2 + 2 H(+) = (20R,22R)-20,22-dihydroxycholesterol + 2 oxidized [adrenodoxin] + H2O. It catalyses the reaction (20R,22R)-20,22-dihydroxycholesterol + 2 reduced [adrenodoxin] + O2 + 2 H(+) = 4-methylpentanal + pregnenolone + 2 oxidized [adrenodoxin] + 2 H2O. It functions in the pathway lipid metabolism; C21-steroid hormone metabolism. The protein operates within steroid metabolism; cholesterol metabolism. In terms of biological role, a cytochrome P450 monooxygenase that catalyzes the side-chain hydroxylation and cleavage of cholesterol to pregnenolone, the precursor of most steroid hormones. Catalyzes three sequential oxidation reactions of cholesterol, namely the hydroxylation at C22 followed with the hydroxylation at C20 to yield 20R,22R-hydroxycholesterol that is further cleaved between C20 and C22 to yield the C21-steroid pregnenolone and 4-methylpentanal. Mechanistically, uses molecular oxygen inserting one oxygen atom into a substrate and reducing the second into a water molecule. Two electrons are provided by NADPH via a two-protein mitochondrial transfer system comprising flavoprotein FDXR (adrenodoxin/ferredoxin reductase) and nonheme iron-sulfur protein FDX1 or FDX2 (adrenodoxin/ferredoxin). In Equus caballus (Horse), this protein is Cholesterol side-chain cleavage enzyme, mitochondrial (CYP11A1).